Here is a 608-residue protein sequence, read N- to C-terminus: Glutamine--fructose-6-phosphate aminotransferase [isomerizing] (608 aa).

C2 (nucleophile; for GATase activity) is an active-site residue. The 216-residue stretch at 2–217 (CGIVGIVGTQ…DGDCAIVTRD (216 aa)) folds into the Glutamine amidotransferase type-2 domain. SIS domains follow at residues 281–422 (ADKA…ARGT) and 456–598 (LSRD…VDQP). K603 acts as the For Fru-6P isomerization activity in catalysis.

As to quaternary structure, homodimer.

Its subcellular location is the cytoplasm. It catalyses the reaction D-fructose 6-phosphate + L-glutamine = D-glucosamine 6-phosphate + L-glutamate. Catalyzes the first step in hexosamine metabolism, converting fructose-6P into glucosamine-6P using glutamine as a nitrogen source. The polypeptide is Glutamine--fructose-6-phosphate aminotransferase [isomerizing] (Agrobacterium fabrum (strain C58 / ATCC 33970) (Agrobacterium tumefaciens (strain C58))).